A 426-amino-acid chain; its full sequence is 3-phosphoshikimate 1-carboxyvinyltransferase (426 aa).

K21, S22, and R26 together coordinate 3-phosphoshikimate. K21 provides a ligand contact to phosphoenolpyruvate. Residues G93 and R121 each contribute to the phosphoenolpyruvate site. 3-phosphoshikimate contacts are provided by S165, Q167, D313, and K340. Q167 provides a ligand contact to phosphoenolpyruvate. D313 acts as the Proton acceptor in catalysis. 2 residues coordinate phosphoenolpyruvate: R344 and R386.

Belongs to the EPSP synthase family. Monomer.

It is found in the cytoplasm. The enzyme catalyses 3-phosphoshikimate + phosphoenolpyruvate = 5-O-(1-carboxyvinyl)-3-phosphoshikimate + phosphate. Its pathway is metabolic intermediate biosynthesis; chorismate biosynthesis; chorismate from D-erythrose 4-phosphate and phosphoenolpyruvate: step 6/7. Catalyzes the transfer of the enolpyruvyl moiety of phosphoenolpyruvate (PEP) to the 5-hydroxyl of shikimate-3-phosphate (S3P) to produce enolpyruvyl shikimate-3-phosphate and inorganic phosphate. The polypeptide is 3-phosphoshikimate 1-carboxyvinyltransferase (Solibacter usitatus (strain Ellin6076)).